A 1123-amino-acid polypeptide reads, in one-letter code: Ubiquitin carboxyl-terminal hydrolase 43 (1123 aa).

The interval 1 to 102 (MDLGPGDAAG…DGARPPGAQG (102 aa)) is disordered. Residues 17-28 (RPRRRRSLRRLF) show a composition bias toward basic residues. The segment covering 29–39 (SRFLLALGSRS) has biased composition (low complexity). The region spanning 101 to 710 (QGLKNHGNTC…GAYILFYQKR (610 aa)) is the USP domain. Cys110 functions as the Nucleophile in the catalytic mechanism. Residues 202–221 (EGSSRGPVSEKLPPEATKTS) form a disordered region. Residue His668 is the Proton acceptor of the active site. Arg746 is modified (asymmetric dimethylarginine). 4 disordered regions span residues 795–826 (ISMKAPTTSRAKQGPFKTMPLRWSFGSKEKPP), 854–886 (TGTAGEDEKSASPRSNVALPANSEDGGRAIERG), 959–1049 (FQMG…RIPE), and 1068–1099 (SSLRLPRKASRAPRGSALGMSQRTVPGEQASY). Ser969 carries the post-translational modification Phosphoserine. A compositionally biased stretch (basic and acidic residues) spans 979-990 (KDSRRGTSELDR). Over residues 1016–1027 (VSPQVPPVSLVS) the composition is skewed to low complexity. Phosphoserine is present on Ser1041.

It belongs to the peptidase C19 family. As to expression, expressed in brain, aorta and lung at low levels.

It carries out the reaction Thiol-dependent hydrolysis of ester, thioester, amide, peptide and isopeptide bonds formed by the C-terminal Gly of ubiquitin (a 76-residue protein attached to proteins as an intracellular targeting signal).. In terms of biological role, may recognize and hydrolyze the peptide bond at the C-terminal Gly of ubiquitin. Involved in the processing of poly-ubiquitin precursors as well as that of ubiquitinated proteins. The polypeptide is Ubiquitin carboxyl-terminal hydrolase 43 (USP43) (Homo sapiens (Human)).